Consider the following 360-residue polypeptide: MDRLFFLDHSPIDFYFKQSPETFVVEEVPLYPFSGAGEHLIVKVRKKNMTTWQMLQSISEQVGVKIRDIGYAGLKDKNALTYQYISLHKKYEEALKKFSHPLIKTIELTYHKNKIRRGHLKGNRFFIRLKKVKPVDAKKIDEVLKILEEEGMPNFFGYQRFGIDGDNWQLGKEIVEGKRKERNKTLKKLLINAYQSHLFNLWLSKRIELSKLLNCFTQNELSQTLDLPRSIIKELQCQKPFFKLFPGDIAMHYPNGKIFGVEDVKGESERFFAKAIAPTGLLPGVKTKRCDGLARDIEKDYDDERISEFGDRRYAWIFPQELHGIYKEKNAWYELSFFLPKGSYATVLLEEIAHRKIKGE.

Residue Asp76 is the Nucleophile of the active site. The region spanning 151-332 is the TRUD domain; that stretch reads GMPNFFGYQR…HGIYKEKNAW (182 aa).

This sequence belongs to the pseudouridine synthase TruD family.

It catalyses the reaction uridine(13) in tRNA = pseudouridine(13) in tRNA. In terms of biological role, responsible for synthesis of pseudouridine from uracil-13 in transfer RNAs. This chain is tRNA pseudouridine synthase D, found in Nitratiruptor sp. (strain SB155-2).